The chain runs to 526 residues: Delayed-rectifier potassium channel regulatory subunit KCNS1 (526 aa).

Residues 1-217 (MLMLLVRGTH…LTMENPGYSL (217 aa)) lie on the Cytoplasmic side of the membrane. Residues 218–239 (PSKLFSCVSISVVLASIAAMCI) form a helical membrane-spanning segment. At 240–270 (HSLPEYQAREAAAAVAAVAAGRSPEGVRDDP) the chain is on the extracellular side. The helical transmembrane segment at 271–293 (VLRRLEYFCIAWFSFEVSSRLLL) threads the bilayer. At 294-304 (APSTRNFFCHP) the chain is on the cytoplasmic side. The chain crosses the membrane as a helical span at residues 305–322 (LNLIDIVSVLPFYLTLLA). Residues 323 to 337 (GVALGDQGGKEFGHL) are Extracellular-facing. A helical; Voltage-sensor membrane pass occupies residues 338–358 (GKVVQVFRLMRIFRVLKLARH). Residues 359–373 (STGLRSLGATLKHSY) are Cytoplasmic-facing. The chain crosses the membrane as a helical span at residues 374–395 (REVGILLLYLAVGVSVFSGVAY). The Extracellular portion of the chain corresponds to 396 to 408 (TAEKEEDVGFNTI). Residues 409 to 420 (PACWWWGTVSMT) constitute an intramembrane region (helical). The Selectivity filter motif lies at 421-426 (TVGYGD). An intramembrane segment occupies 421–428 (TVGYGDVV). Residues 429 to 435 (PVTVAGK) are Extracellular-facing. Residues 436–464 (LAASGCILGGILVVALPITIIFNKFSHFY) form a helical membrane-spanning segment. At 465–526 (RRQKALEAAV…PSEPPHPQMY (62 aa)) the chain is on the cytoplasmic side. Residues 491–526 (GVSEASLETSRETSQEGRSADLESQAPSEPPHPQMY) are disordered. The span at 499-511 (TSRETSQEGRSAD) shows a compositional bias: basic and acidic residues.

The protein belongs to the potassium channel family. S (TC 1.A.1.2) subfamily. Kv9.1/KCNS1 sub-subfamily. As to quaternary structure, heterotetramer with KCNB1. Heterotetramer with KCNB2. Does not form homomultimers.

Its subcellular location is the cell membrane. Its function is as follows. Potassium channel regulatory subunit that modulate the delayed rectifier voltage-gated potassium channel activity of KCNB1 and KCNB2 by altering their kinetics, expression levels, and shifting the half-inactivation potential to more polarized values. While it does not form functional channels on its own, it can form functional heterotetrameric channels with KCNB1 and KCNB2. Each regulatory subunit has unique regulatory properties that can lead to extensive inhibition, significant changes in kinetics, and/or substantial shifts in the voltage dependencies of the inactivation process. The sequence is that of Delayed-rectifier potassium channel regulatory subunit KCNS1 from Pan troglodytes (Chimpanzee).